The sequence spans 310 residues: Fatty acid elongase 1 (310 aa).

The Lumenal segment spans residues Met-1 to Arg-63. The helical transmembrane segment at Pro-64–Lys-84 threads the bilayer. Residues Ser-85 to Leu-100 lie on the Cytoplasmic side of the membrane. The helical transmembrane segment at Met-101–Val-121 threads the bilayer. Residues Tyr-122–Glu-141 are Lumenal-facing. A helical membrane pass occupies residues Thr-142 to Leu-163. Residues Lys-164–Tyr-174 are Cytoplasmic-facing. Positions His-172–His-176 match the HxxHH motif motif. A helical membrane pass occupies residues His-175–Val-196. The Lumenal segment spans residues Pro-197–Asn-201. A helical membrane pass occupies residues Leu-202–Trp-223. Topologically, residues Lys-224–Gln-234 are cytoplasmic. Residues Phe-235–Phe-255 traverse the membrane as a helical segment. Residues Lys-256–Thr-271 lie on the Lumenal side of the membrane. The chain crosses the membrane as a helical span at residues Ala-272 to Ile-292. Over Glu-293–Asn-310 the chain is Cytoplasmic. Positions Lys-304–Asn-307 match the Di-lysine motif motif.

It belongs to the ELO family.

The protein resides in the endoplasmic reticulum membrane. The catalysed reaction is a very-long-chain acyl-CoA + malonyl-CoA + H(+) = a very-long-chain 3-oxoacyl-CoA + CO2 + CoA. The enzyme catalyses tetradecanoyl-CoA + malonyl-CoA + H(+) = 3-oxohexadecanoyl-CoA + CO2 + CoA. It carries out the reaction (9Z)-tetradecenoyl-CoA + malonyl-CoA + H(+) = 3-oxo-(11Z)-hexadecenoyl-CoA + CO2 + CoA. In terms of biological role, component of a microsomal membrane bound medium-chain fatty acid elongation system, which extends medium-chain-length fatty acids to long-chain fatty acids. Component of elongase I, which extends 12-16-carbon fatty acyl-CoAs such as lauroyl-CoA to 14-18-carbon fatty acids by incorporation of malonyl-CoA. The sequence is that of Fatty acid elongase 1 from Saccharomyces cerevisiae (strain ATCC 204508 / S288c) (Baker's yeast).